The following is a 217-amino-acid chain: Somatotropin (217 aa).

The N-terminal stretch at 1–26 (MMAAGPRTSLLLAFALLCLPWTQVVG) is a signal peptide. His-46 provides a ligand contact to Zn(2+). Residues Cys-79 and Cys-190 are joined by a disulfide bond. Ser-132 carries the post-translational modification Phosphoserine. Glu-199 is a binding site for Zn(2+). An intrachain disulfide couples Cys-207 to Cys-215.

It belongs to the somatotropin/prolactin family.

It localises to the secreted. In terms of biological role, plays an important role in growth control. Its major role in stimulating body growth is to stimulate the liver and other tissues to secrete IGF1. It stimulates both the differentiation and proliferation of myoblasts. It also stimulates amino acid uptake and protein synthesis in muscle and other tissues. In Bubalus bubalis (Domestic water buffalo), this protein is Somatotropin (GH1).